A 168-amino-acid polypeptide reads, in one-letter code: uncharacterized protein (168 aa).

The helical transmembrane segment at 5 to 24 threads the bilayer; it reads IAWASACLLLVMLTGFFTIG.

The protein resides in the membrane. This is an uncharacterized protein from Bacillus subtilis (strain 168).